Here is a 289-residue protein sequence, read N- to C-terminus: Bidirectional sugar transporter SWEET15 (289 aa).

Over Met-1–Thr-10 the chain is Extracellular. Residues Leu-11 to Ala-31 form a helical membrane-spanning segment. The 87-residue stretch at Ile-14 to Ala-100 folds into the MtN3/slv 1 domain. At Pro-32–Gly-45 the chain is on the cytoplasmic side. The chain crosses the membrane as a helical span at residues Phe-46–Leu-66. Over Leu-67–Asp-70 the chain is Extracellular. The chain crosses the membrane as a helical span at residues Ala-71–Leu-91. The Cytoplasmic portion of the chain corresponds to Tyr-92 to Lys-106. Residues Val-107–Leu-127 form a helical membrane-spanning segment. At Lys-128–Asn-134 the chain is on the extracellular side. Residues Val-135 to Val-155 traverse the membrane as a helical segment. In terms of domain architecture, MtN3/slv 2 spans Phe-136–Gly-219. At Ala-156–Met-167 the chain is on the cytoplasmic side. A helical membrane pass occupies residues Pro-168–Leu-188. Residues Lys-189–Cys-193 are Extracellular-facing. Residues Val-194–Phe-214 form a helical membrane-spanning segment. The Cytoplasmic portion of the chain corresponds to Tyr-215 to Val-289. The interval Gly-249–Val-289 is disordered. The span at Glu-277–Val-289 shows a compositional bias: polar residues.

This sequence belongs to the SWEET sugar transporter family. As to quaternary structure, forms homooligomers and/or heterooligomers.

The protein localises to the cell membrane. Its function is as follows. Mediates both low-affinity uptake and efflux of sugar across the plasma membrane. This Vitis vinifera (Grape) protein is Bidirectional sugar transporter SWEET15.